Reading from the N-terminus, the 726-residue chain is ORC ubiquitin ligase 1 (726 aa).

An RING-type; degenerate zinc finger spans residues cysteine 18–arginine 56. Coiled-coil stretches lie at residues leucine 87–aspartate 129 and glutamate 155–isoleucine 270. Residue serine 210 is modified to Phosphoserine. Disordered regions lie at residues serine 276 to alanine 334 and asparagine 436 to serine 460. Positions lysine 280–valine 290 are enriched in basic and acidic residues. The span at serine 304 to serine 318 shows a compositional bias: low complexity. Positions arginine 319–alanine 334 are enriched in polar residues. Residues aspartate 446–glutamate 457 show a composition bias toward basic and acidic residues. Residues serine 526, serine 553, serine 561, serine 568, and serine 570 each carry the phosphoserine modification. 2 disordered regions span residues serine 570–glutamate 602 and glutamine 687–serine 726. Over residues glutamate 579 to glutamate 588 the composition is skewed to basic and acidic residues. Polar residues predominate over residues leucine 589–glutamate 602. Low complexity predominate over residues serine 713–serine 726. A phosphoserine mark is found at serine 719 and serine 721.

In terms of assembly, associates with ORC complex. Binds to chromatin; association is cell cycle-regulated, absent from mitotic chromosomes, is associated with chromatin from G1 and partially released from chromatin from mid S-phase. Post-translationally, auto-ubiquitinated.

The protein localises to the chromosome. It carries out the reaction S-ubiquitinyl-[E2 ubiquitin-conjugating enzyme]-L-cysteine + [acceptor protein]-L-lysine = [E2 ubiquitin-conjugating enzyme]-L-cysteine + N(6)-ubiquitinyl-[acceptor protein]-L-lysine.. In terms of biological role, E3 ubiquitin ligase essential for DNA replication origin activation during S phase. Acts as a replication origin selector which selects the origins to be fired and catalyzes the multi-mono-ubiquitination of a subset of chromatin-bound ORC3 and ORC5 during S-phase. The protein is ORC ubiquitin ligase 1 of Homo sapiens (Human).